The following is a 3082-amino-acid chain: Autotransporter adhesin BadA (3082 aa).

The first 47 residues, 1 to 47 (MKKLSVTSKRQYNLYASPISRRLSLLMKLSLETVTVMFLLGASPVLA), serve as a signal peptide directing secretion. Positions 48–376 (SNLALTGAKN…DAVNVAQLKA (329 aa)) are binds to host cells. The interval 48 to 2901 (SNLALTGAKN…KVQDIATVAD (2854 aa)) is surface exposed passenger domain. The does not bind host cells, no host proangiogenic cytokine induction, collagen or fibronectin, no autoagglutination stretch occupies residues 53–2850 (TGAKNLSQNS…DARHNGVDSK (2798 aa)). The segment at 470 to 2850 (ITGVAEGTDA…DARHNGVDSK (2381 aa)) is required to bind fibronectin, not required for surface expression on bacteria, bacterial autoagglutination, host cell binding, collagen binding or host proangiogenic cytokine induction. Residues 2902–3027 (SAVKYEKDST…VSNLRYYDIP (126 aa)) form an outer membrane translocation of the passenger domain region. 4 beta stranded membrane-spanning segments follow: residues 3028 to 3039 (GSLSLSFGTGIW), 3044 to 3051 (AFAIGAGY), 3055 to 3065 (DGNIRSNLSIT), and 3070 to 3082 (QWGV…LRLK). The translocator domain stretch occupies residues 3028-3082 (GSLSLSFGTGIWRSQSAFAIGAGYTSEDGNIRSNLSITSSGGQWGVGAGITLRLK).

The protein belongs to the autotransporter-2 (AT-2) (TC 1.B.40) family. As to quaternary structure, homotrimer. Crystals of the head region form trimers.

The protein resides in the cell surface. Its subcellular location is the cell outer membrane. In terms of biological role, mediates bacterial adherence to host endothelial cells and host extracellular matrix proteins (collagen type I, III, IV, laminin and fibronectin). Static versus dynamic adherence results differ slightly; in dynamic adherence studies bacteria bind to fixed components under a constant defined flow rate to simulate in vivo infection conditions. Induces secretion of host proangiogenic cytokines such as VEGFA, ADM, IGFBP-3 and IL-8. May prevent bacterial phagocytosis by macrophages. Probably mediates bacterial autoagglutination. Negatively impacts type IV secretion system effectors (VirB/D4 T4SS and its substrate Bep proteins), possibly by preventing close association of host and bacterial cells. This implies the 2 factors are expressed at different times during infection. This chain is Autotransporter adhesin BadA, found in Bartonella henselae (Rochalimaea henselae).